We begin with the raw amino-acid sequence, 341 residues long: Cobalt-precorrin-5B C(1)-methyltransferase (341 aa).

Belongs to the CbiD family.

The catalysed reaction is Co-precorrin-5B + S-adenosyl-L-methionine = Co-precorrin-6A + S-adenosyl-L-homocysteine. The protein operates within cofactor biosynthesis; adenosylcobalamin biosynthesis; cob(II)yrinate a,c-diamide from sirohydrochlorin (anaerobic route): step 6/10. Catalyzes the methylation of C-1 in cobalt-precorrin-5B to form cobalt-precorrin-6A. This Picrophilus torridus (strain ATCC 700027 / DSM 9790 / JCM 10055 / NBRC 100828 / KAW 2/3) protein is Cobalt-precorrin-5B C(1)-methyltransferase.